Here is a 545-residue protein sequence, read N- to C-terminus: Carboxylesterase 5A (545 aa).

A signal peptide spans 1-28; the sequence is MSGMWVHPGRTLIWALWVLAAVIKGPAA. N-linked (GlcNAc...) (complex) asparagine glycosylation is present at Asn-86. Cys-94 and Cys-121 are disulfide-bonded. An N-linked (GlcNAc...) asparagine glycan is attached at Asn-134. The active-site Acyl-ester intermediate is the Ser-226. Cys-281 and Cys-292 are oxidised to a cystine. Residue Glu-346 is the Charge relay system of the active site. Residues Asn-363 and Asn-443 are each glycosylated (N-linked (GlcNAc...) asparagine). His-454 functions as the Charge relay system in the catalytic mechanism.

The protein belongs to the type-B carboxylesterase/lipase family. In terms of processing, N-glycosylated; contains a fucosylated complex carbohydrate. In terms of tissue distribution, present at high level in urine. Expressed in the kidney proximal straight tubular cells and is secreted from the apical compartment of the cells into the urine (at protein level). In mature cats, it is present at higher level in intact males than in castrated males or in intact or spayed females.

The protein localises to the secreted. It catalyses the reaction a carboxylic ester + H2O = an alcohol + a carboxylate + H(+). Functionally, carboxylesterase present at high level in urine that regulates production of felinine, a probable pheromone precursor. Probably acts by hydrolyzing the peptide bond of the felinine precursor 3-methylbutanol cyteinylglycine, producing felinine and glycine in cat urine. In Felis catus (Cat), this protein is Carboxylesterase 5A (CES5A).